We begin with the raw amino-acid sequence, 1385 residues long: Formin-like protein 7 (1385 aa).

Residues 9 to 193 (FKKPPDGLLL…RYVSMRNVVP (185 aa)) enclose the Phosphatase tensin-type domain. The Phosphocysteine intermediate role is filled by Cys126. One can recognise a C2 tensin-type domain in the interval 199–358 (DRALTLDSVI…KASSTSQGNI (160 aa)). Disordered regions lie at residues 345-367 (IPQR…DGSE), 427-510 (APSR…LTVN), 649-989 (STAA…PLHW), and 1362-1385 (KRAQ…LLEP). Composition is skewed to polar residues over residues 349-358 (KASSTSQGNI), 448-470 (TSAS…SPVQ), and 483-510 (PAQS…LTVN). Composition is skewed to pro residues over residues 654–665 (PPLPPPLPPPLK) and 689–701 (TQPP…PPIQ). Residues 702–718 (PTLISNSIYSSTSSVVS) show a composition bias toward low complexity. Composition is skewed to pro residues over residues 727 to 758 (PAPP…PPSA), 766 to 795 (PVPP…PPAA), and 802 to 815 (AVPP…PPMV). Low complexity predominate over residues 855–867 (QTSSLVSSLPSSR). 2 stretches are compositionally biased toward pro residues: residues 895–906 (SAPPAPPLPPPK) and 921–932 (WPPPPPPGPPPK). Positions 933–942 (NSSNSLPSKG) are enriched in low complexity. Residues 974–1372 (RPNQSSKRTP…RAQMEAEKEK (399 aa)) enclose the FH2 domain.

The protein belongs to the formin-like family. Class-II subfamily.

In Oryza sativa subsp. japonica (Rice), this protein is Formin-like protein 7 (FH7).